The sequence spans 247 residues: Probable chemoreceptor glutamine deamidase CheD (247 aa).

The tract at residues 204–247 (KRPAAPQPARPRIELFGGRGTAPGAGSPSAGSPYAANLSRKQEA) is disordered. Over residues 227–239 (GAGSPSAGSPYAA) the composition is skewed to low complexity.

Belongs to the CheD family.

It catalyses the reaction L-glutaminyl-[protein] + H2O = L-glutamyl-[protein] + NH4(+). Its function is as follows. Probably deamidates glutamine residues to glutamate on methyl-accepting chemotaxis receptors (MCPs), playing an important role in chemotaxis. The protein is Probable chemoreceptor glutamine deamidase CheD of Burkholderia orbicola (strain AU 1054).